The following is a 338-amino-acid chain: uncharacterized protein (338 aa).

The interval 1 to 72 is disordered; that stretch reads MASPPILSRE…LNPVEDYDSK (72 aa). A compositionally biased stretch (polar residues) spans 24–38; that stretch reads GGNSEVNIDPSASSS. Positions 49–58 are enriched in basic and acidic residues; sequence ADTKIDPHLL. The segment covering 59-68 has biased composition (acidic residues); it reads EEDDLNPVED.

The protein resides in the cytoplasm. It localises to the nucleus. This is an uncharacterized protein from Schizosaccharomyces pombe (strain 972 / ATCC 24843) (Fission yeast).